The sequence spans 467 residues: A-type ATP synthase subunit B (467 aa).

The protein belongs to the ATPase alpha/beta chains family. As to quaternary structure, has multiple subunits with at least A(3), B(3), C, D, E, F, H, I and proteolipid K(x).

It localises to the cell membrane. Component of the A-type ATP synthase that produces ATP from ADP in the presence of a proton gradient across the membrane. The B chain is a regulatory subunit. This is A-type ATP synthase subunit B from Methanosphaera stadtmanae (strain ATCC 43021 / DSM 3091 / JCM 11832 / MCB-3).